The primary structure comprises 89 residues: Small ribosomal subunit protein uS14 (89 aa).

The protein belongs to the universal ribosomal protein uS14 family. In terms of assembly, part of the 30S ribosomal subunit. Contacts proteins S3 and S10.

Its function is as follows. Binds 16S rRNA, required for the assembly of 30S particles and may also be responsible for determining the conformation of the 16S rRNA at the A site. The polypeptide is Small ribosomal subunit protein uS14 (Deinococcus radiodurans (strain ATCC 13939 / DSM 20539 / JCM 16871 / CCUG 27074 / LMG 4051 / NBRC 15346 / NCIMB 9279 / VKM B-1422 / R1)).